The sequence spans 205 residues: LexA repressor (205 aa).

The segment at residues 28-48 (IRDIMKHFNFKSPRAAHKHLI) is a DNA-binding region (H-T-H motif). Active-site for autocatalytic cleavage activity residues include S125 and K163.

This sequence belongs to the peptidase S24 family. Homodimer.

The enzyme catalyses Hydrolysis of Ala-|-Gly bond in repressor LexA.. Its function is as follows. Represses a number of genes involved in the response to DNA damage (SOS response), including recA and lexA. In the presence of single-stranded DNA, RecA interacts with LexA causing an autocatalytic cleavage which disrupts the DNA-binding part of LexA, leading to derepression of the SOS regulon and eventually DNA repair. The protein is LexA repressor of Petrotoga mobilis (strain DSM 10674 / SJ95).